The sequence spans 74 residues: ATP synthase subunit c (74 aa).

Transmembrane regions (helical) follow at residues isoleucine 9–phenylalanine 29 and phenylalanine 54–valine 74.

The protein belongs to the ATPase C chain family. As to quaternary structure, F-type ATPases have 2 components, F(1) - the catalytic core - and F(0) - the membrane proton channel. F(1) has five subunits: alpha(3), beta(3), gamma(1), delta(1), epsilon(1). F(0) has three main subunits: a(1), b(2) and c(10-14). The alpha and beta chains form an alternating ring which encloses part of the gamma chain. F(1) is attached to F(0) by a central stalk formed by the gamma and epsilon chains, while a peripheral stalk is formed by the delta and b chains.

It is found in the cell inner membrane. F(1)F(0) ATP synthase produces ATP from ADP in the presence of a proton or sodium gradient. F-type ATPases consist of two structural domains, F(1) containing the extramembraneous catalytic core and F(0) containing the membrane proton channel, linked together by a central stalk and a peripheral stalk. During catalysis, ATP synthesis in the catalytic domain of F(1) is coupled via a rotary mechanism of the central stalk subunits to proton translocation. In terms of biological role, key component of the F(0) channel; it plays a direct role in translocation across the membrane. A homomeric c-ring of between 10-14 subunits forms the central stalk rotor element with the F(1) delta and epsilon subunits. This Gluconacetobacter diazotrophicus (strain ATCC 49037 / DSM 5601 / CCUG 37298 / CIP 103539 / LMG 7603 / PAl5) protein is ATP synthase subunit c.